Reading from the N-terminus, the 314-residue chain is MKSSILASAAILAASLEPVAALSEPLQNILINTDRSPIYRYPTDVTRGIVPIPVHSHNDYWRDIPFYTALTTKLALSAGCISIEADVFLFNDTLYVGHEESALTKERTLQSLYIEPLMNVLKKTNPKSPFVSGPTRHGVFDTSSGQTLYLWIDVKNDGEKAWPHIVKALQPLRDANYLTKIQNNESFVPGPVTVIGTGGTPLSQVVSAADRDYFYDGPLKDLTGFTSLISPIASTSLMEVVGDIKSDSENPLNPTQLEAIRKQIKAAKEKSIGVRYWETPGWPIRLRNELWRTLWKEGVALLNADDVNAAKGYF.

Positions 1 to 21 (MKSSILASAAILAASLEPVAA) are cleaved as a signal peptide. N-linked (GlcNAc...) asparagine glycans are attached at residues Asn-91 and Asn-184.

It belongs to the AIM6 family.

It is found in the secreted. The protein is Altered inheritance of mitochondria protein 6 homolog ARB_06966 of Arthroderma benhamiae (strain ATCC MYA-4681 / CBS 112371) (Trichophyton mentagrophytes).